Here is a 92-residue protein sequence, read N- to C-terminus: NELL2-interacting cell ontogeny regulator 1 (92 aa).

The first 30 residues, 1–30 (MALPSAWSVMRVVIPFISVLGLLGVRLVGA), serve as a signal peptide directing secretion.

This sequence belongs to the NICOL family.

The protein resides in the secreted. The protein localises to the cytoplasm. Its subcellular location is the perinuclear region. MRNA-binding protein which interacts with a range of target mRNAs and may promote extracellular matrix production. May function as a component of lumicrine signaling and may play a crucial role in epididymal-mediated sperm maturation and male fertility. In Gallus gallus (Chicken), this protein is NELL2-interacting cell ontogeny regulator 1.